A 214-amino-acid polypeptide reads, in one-letter code: Osteoclast-stimulating factor 1 (214 aa).

Positions 12 to 71 constitute an SH3 domain; sequence GQVKVYRALFTFDPRTPDELYFEEGDILYISDTSDSNWWKGTCRGRTGLIPSNYVAEQAE. ANK repeat units lie at residues 72 to 101, 105 to 135, and 139 to 168; these read SIDN…GING, AGNT…ELNQ, and LGDT…RTDV.

It localises to the cytoplasm. In terms of biological role, induces bone resorption, acting probably through a signaling cascade which results in the secretion of factor(s) enhancing osteoclast formation and activity. This chain is Osteoclast-stimulating factor 1 (ostf1), found in Danio rerio (Zebrafish).